The following is a 333-amino-acid chain: 4-hydroxyproline 2-epimerase (333 aa).

Cys-91 (proton acceptor) is an active-site residue. Substrate is bound by residues 92–93, His-225, and Asp-250; that span reads GH. The active-site Proton donor is the Cys-254. Residue 255 to 256 participates in substrate binding; that stretch reads GT.

Belongs to the proline racemase family.

The enzyme catalyses trans-4-hydroxy-L-proline = cis-4-hydroxy-D-proline. Its function is as follows. Catalyzes the epimerization of trans-4-hydroxy-L-proline (t4LHyp) to cis-4-hydroxy-D-proline (c4DHyp). Is likely involved in a degradation pathway that converts t4LHyp to alpha-ketoglutarate. Displays no proline racemase activity. This Streptosporangium roseum (strain ATCC 12428 / DSM 43021 / JCM 3005 / KCTC 9067 / NCIMB 10171 / NRRL 2505 / NI 9100) protein is 4-hydroxyproline 2-epimerase.